The chain runs to 557 residues: Protein Red (557 aa).

The segment at Met-1–Glu-90 is disordered. Basic and acidic residues predominate over residues Asp-16–Ser-25. Residues Thr-42 to Ser-53 are compositionally biased toward low complexity. An N6-acetyllysine mark is found at Lys-98 and Lys-137. Residue Lys-151 forms a Glycyl lysine isopeptide (Lys-Gly) (interchain with G-Cter in SUMO2) linkage. The interval Lys-181–Lys-205 is disordered. Ser-287 is subject to Phosphoserine. Residues Arg-294–Lys-303 are compositionally biased toward basic residues. The interval Arg-294–Ser-402 is disordered. Over residues Gly-304–Glu-313 the composition is skewed to basic and acidic residues. Glycyl lysine isopeptide (Lys-Gly) (interchain with G-Cter in SUMO2) cross-links involve residues Lys-310 and Lys-331. Residues Thr-332–Lys-398 are compositionally biased toward basic and acidic residues. Tandem repeats lie at residues Arg-342 to Glu-343, Arg-344 to Glu-345, Arg-346 to Asp-347, Arg-348 to Glu-349, Arg-350 to Asp-351, Arg-352 to Asp-353, Arg-354 to Glu-355, Arg-356 to Asp-357, Arg-358 to Glu-359, Arg-360 to Asp-361, Arg-362 to Glu-363, Arg-364 to Glu-365, Arg-366 to Glu-367, Arg-368 to Asp-369, Arg-370 to Glu-371, Arg-372 to Glu-373, and Arg-374 to Glu-375. The interval Arg-342 to Glu-375 is 17 X 2 AA tandem repeats of R-[ED]. Glycyl lysine isopeptide (Lys-Gly) (interchain with G-Cter in SUMO2) cross-links involve residues Lys-386, Lys-388, Lys-404, and Lys-408. A phosphoserine mark is found at Ser-417 and Ser-460. Thr-485 bears the Phosphothreonine mark. Glycyl lysine isopeptide (Lys-Gly) (interchain with G-Cter in SUMO2) cross-links involve residues Lys-496, Lys-501, and Lys-509. A Phosphoserine modification is found at Ser-536. Residues Lys-541, Lys-543, Lys-544, and Lys-553 each participate in a glycyl lysine isopeptide (Lys-Gly) (interchain with G-Cter in SUMO2) cross-link.

It belongs to the RED family. In terms of assembly, component of the spliceosome B complex. Interacts with SMU1. Interacts with MAD1L1. May interact with DHX15.

Its subcellular location is the nucleus. The protein resides in the nucleoplasm. It is found in the chromosome. The protein localises to the cytoplasm. It localises to the cytoskeleton. Its subcellular location is the spindle pole. Functionally, involved in pre-mRNA splicing as a component of the spliceosome. Auxiliary spliceosomal protein that regulates selection of alternative splice sites in a small set of target pre-mRNA species. Required for normal mitotic cell cycle progression. Recruits MAD1L1 and MAD2L1 to kinetochores, and is required to trigger the spindle assembly checkpoint. Required for normal accumulation of SMU1. This is Protein Red (Ik) from Rattus norvegicus (Rat).